A 1238-amino-acid polypeptide reads, in one-letter code: Anion exchange protein 2 (1238 aa).

A disordered region spans residues 1 to 238 (MSGTPRRPAS…YNLQERRRIG (238 aa)). The Cytoplasmic portion of the chain corresponds to 1 to 704 (MSGTPRRPAS…SDFRDALDPQ (704 aa)). 2 stretches are compositionally biased toward basic and acidic residues: residues 37 to 49 (DLHRTLGVERFEE) and 58 to 75 (GGEELGRSYGEEDFEYHR). Basic residues-rich tracts occupy residues 76–85 (QSSHHIHHPL) and 94–110 (RRRKTPQGQVRKPRRRP). A compositionally biased stretch (acidic residues) spans 120–133 (TIEEGEEDEDETSE). Phosphoserine occurs at positions 132, 144, 170, and 172. The segment covering 141 to 154 (TDPSPASTPTSVQF) has biased composition (polar residues). Residues 205 to 215 (GTAGGDDGGAS) are compositionally biased toward gly residues. The residue at position 239 (Ser-239) is a Phosphoserine. Position 253 is a phosphothreonine (Thr-253). An N6-methyllysine modification is found at Lys-270. A disordered region spans residues 277–315 (VPGVRRHLVRKNAKGSSQSSREGREPGPTPRTRPRAPHK). Residues 280–289 (VRRHLVRKNA) show a composition bias toward basic residues. Position 439 is a phosphoserine (Ser-439). The segment at 445-466 (SLLGHHHTQGAESDPHVTEPLI) is disordered. The next 4 membrane-spanning stretches (helical) occupy residues 705–728 (CLAAVIFIYFAALSPAITFGGLLG), 734–771 (LIGVSELIMSTALQGVTFCLLGAQPLLVIGFSGPLLVF), 791–813 (VWIGFWLVLSALLMVALEGSFLV), and 823–844 (IFAFLISLIFIYETFYKLVKIF). Positions 705 to 1238 (CLAAVIFIYF…DEYNEMPMPV (534 aa)) are membrane (anion exchange). Residues 845–897 (QEHPLHGCLASNSSEADGGKNTTWTEAAPTPGHGNTSSAEQAGVERPQGQPNT) are Extracellular-facing. Residues Asn-856, Asn-865, and Asn-879 are each glycosylated (N-linked (GlcNAc...) asparagine). The span at 858–869 (SEADGGKNTTWT) shows a compositional bias: polar residues. The interval 858–892 (SEADGGKNTTWTEAAPTPGHGNTSSAEQAGVERPQ) is disordered. The chain crosses the membrane as a helical span at residues 898–915 (ALLSLVLMAGTFFIAFFL). Residues 916–930 (RKFKNSRFFPGRIRR) are Cytoplasmic-facing. The next 5 membrane-spanning stretches (helical) occupy residues 931 to 951 (VIGDFGVPIAILIMVLVDYSI), 985 to 1007 (PFPVWMMVASLLPAILVFILIFM), 1033 to 1054 (LLLIVAMGGICALFGLLWLAAA), 1088 to 1133 (VTGL…IQFY), and 1160 to 1196 (MHLFKALQLLCLALLWAVMSTAASLAFPFILILTVPL). Cys-1170 carries S-palmitoyl cysteine lipidation.

Belongs to the anion exchanger (TC 2.A.31) family. In terms of tissue distribution, expressed in the cochlea (at protein level).

Its subcellular location is the apical cell membrane. It localises to the basolateral cell membrane. It carries out the reaction hydrogencarbonate(in) + chloride(out) = hydrogencarbonate(out) + chloride(in). Functionally, sodium-independent anion exchanger which mediates the electroneutral exchange of chloride for bicarbonate ions across the cell membrane. Plays an important role in osteoclast differentiation and function. Regulates bone resorption and calpain-dependent actin cytoskeleton organization in osteoclasts via anion exchange-dependent control of pH. Essential for intracellular pH regulation in CD8(+) T-cells upon CD3 stimulation, modulating CD8(+) T-cell response. The polypeptide is Anion exchange protein 2 (SLC4A2) (Cavia porcellus (Guinea pig)).